The sequence spans 37 residues: Large ribosomal subunit protein bL12 (37 aa).

It belongs to the bacterial ribosomal protein bL12 family. In terms of assembly, homodimer. Part of the ribosomal stalk of the 50S ribosomal subunit. Forms a multimeric L10(L12)X complex, where L10 forms an elongated spine to which 2 to 4 L12 dimers bind in a sequential fashion. Binds GTP-bound translation factors.

Its function is as follows. Forms part of the ribosomal stalk which helps the ribosome interact with GTP-bound translation factors. Is thus essential for accurate translation. The chain is Large ribosomal subunit protein bL12 (rplL) from Clostridium pasteurianum.